The following is a 147-amino-acid chain: Bis(5'-nucleosyl)-tetraphosphatase [asymmetrical] (147 aa).

N-acetylalanine is present on alanine 2. In terms of domain architecture, Nudix hydrolase spans 2-139 (ALRACGLIIF…DMKAVLQEGH (138 aa)). The Nudix box motif lies at 43–64 (GHVEPGESDLQTALRETQEEAG).

It belongs to the Nudix hydrolase family. The cofactor is a divalent metal cation.

It carries out the reaction P(1),P(4)-bis(5'-guanosyl) tetraphosphate + H2O = GMP + GTP + 2 H(+). The catalysed reaction is a 5'-end CoA-ribonucleoside in mRNA + H2O = a 5'-end phospho-adenosine-phospho-ribonucleoside in mRNA + (R)-4'-phosphopantetheine + 2 H(+). The enzyme catalyses a 5'-end FAD-phospho-ribonucleoside in mRNA + H2O = a 5'-end phospho-adenosine-phospho-ribonucleoside in mRNA + FMN + 2 H(+). With respect to regulation, inhibited by fluoride ions. Catalyzes the asymmetric hydrolysis of diadenosine 5',5'''-P1,P4-tetraphosphate (Ap4A) to yield AMP and ATP. Exhibits decapping activity towards FAD-capped RNAs and dpCoA-capped RNAs in vitro. In Sus scrofa (Pig), this protein is Bis(5'-nucleosyl)-tetraphosphatase [asymmetrical] (NUDT2).